The sequence spans 105 residues: Small ribosomal subunit protein eS24 (105 aa).

Positions 86 to 105 (LERNKIEADEEADEEAAEEA) are disordered. Residues 93–105 (ADEEADEEAAEEA) are compositionally biased toward acidic residues.

Belongs to the eukaryotic ribosomal protein eS24 family.

The polypeptide is Small ribosomal subunit protein eS24 (Natronomonas pharaonis (strain ATCC 35678 / DSM 2160 / CIP 103997 / JCM 8858 / NBRC 14720 / NCIMB 2260 / Gabara) (Halobacterium pharaonis)).